Consider the following 106-residue polypeptide: Replication restart protein PriB (106 aa).

In terms of domain architecture, SSB spans 4-103 (MNRLVLSGTV…LHAEQIELID (100 aa)).

The protein belongs to the PriB family. Homodimer. Interacts with PriA and DnaT. Component of the replication restart primosome. Primosome assembly occurs via a 'hand-off' mechanism. PriA binds to replication forks, subsequently PriB then DnaT bind; DnaT then displaces ssDNA to generate the helicase loading substrate.

Its function is as follows. Involved in the restart of stalled replication forks, which reloads the replicative helicase on sites other than the origin of replication; the PriA-PriB pathway is the major replication restart pathway. During primosome assembly it facilitates complex formation between PriA and DnaT on DNA; stabilizes PriA on DNA. Stimulates the DNA unwinding activity of PriA helicase. This is Replication restart protein PriB from Pectobacterium atrosepticum (strain SCRI 1043 / ATCC BAA-672) (Erwinia carotovora subsp. atroseptica).